The primary structure comprises 94 residues: Co-chaperonin GroES (94 aa).

Belongs to the GroES chaperonin family. In terms of assembly, heptamer of 7 subunits arranged in a ring. Interacts with the chaperonin GroEL.

Its subcellular location is the cytoplasm. In terms of biological role, together with the chaperonin GroEL, plays an essential role in assisting protein folding. The GroEL-GroES system forms a nano-cage that allows encapsulation of the non-native substrate proteins and provides a physical environment optimized to promote and accelerate protein folding. GroES binds to the apical surface of the GroEL ring, thereby capping the opening of the GroEL channel. This is Co-chaperonin GroES from Streptococcus pneumoniae (strain ATCC 700669 / Spain 23F-1).